Here is a 140-residue protein sequence, read N- to C-terminus: Callisulfakinin (140 aa).

The N-terminal stretch at 1–30 is a signal peptide; the sequence is MYSQQRIFNSKYFIFFIAVLSIFWLPTMSA. Residues 31–109 constitute a propeptide that is removed on maturation; the sequence is RNLENSKNEN…LEYEDEDRSK (79 aa). Tyr-114 is subject to Sulfotyrosine. Phe-119 is subject to Phenylalanine amide. The residue at position 131 (Tyr-131) is a Sulfotyrosine. Phenylalanine amide is present on Phe-136. Positions 139–140 are excised as a propeptide; the sequence is SI.

This sequence belongs to the gastrin/cholecystokinin family. In terms of tissue distribution, in brain, it is specifically expressed in four pairs of neurons. Not expressed in other cells of the brain and in the thoracico-abdominal ganglion.

Its subcellular location is the secreted. Callisulfakinin I is a neuropeptide. The existence of Callisulfakinin II is uncertain. The polypeptide is Callisulfakinin (Calliphora vomitoria (Blue bottle fly)).